The sequence spans 437 residues: O-methyltransferase 3 (437 aa).

The disordered stretch occupies residues 1-21 (MNNKTSNGDITNDEPTVGSKR). A coiled-coil region spans residues 146 to 180 (SDNLYQDKDDLEKQEKEREKKMANLLSKNVDIKEL). Residues 408–437 (DPINNNNNNNNNNNNNNNNTTTTTSTTTTN) form a disordered region. Residues 411–437 (NNNNNNNNNNNNNNNNTTTTTSTTTTN) show a composition bias toward low complexity.

Belongs to the methyltransferase superfamily. METL family.

In terms of biological role, probable methyltransferase. This chain is O-methyltransferase 3 (omt3), found in Dictyostelium discoideum (Social amoeba).